Here is a 149-residue protein sequence, read N- to C-terminus: Large ribosomal subunit protein bL9 (149 aa).

Belongs to the bacterial ribosomal protein bL9 family.

Binds to the 23S rRNA. This chain is Large ribosomal subunit protein bL9, found in Salmonella agona (strain SL483).